Consider the following 309-residue polypeptide: RING finger protein mug145 (309 aa).

The chain crosses the membrane as a helical span at residues 23 to 43 (ILLFALVIILSVIFINFFFFY). Residues 205–247 (CIICYADYAFDDILRVLPCEHVFHTQCIDTWMTTMKASCPLCN) form an RING-type; atypical zinc finger.

The protein localises to the membrane. Has a role in meiosis. The sequence is that of RING finger protein mug145 (mug145) from Schizosaccharomyces pombe (strain 972 / ATCC 24843) (Fission yeast).